We begin with the raw amino-acid sequence, 375 residues long: Ornithine carbamoyltransferase, chloroplastic (375 aa).

Carbamoyl phosphate contacts are provided by residues 123 to 126 (SMRT), Arg174, His201, and Gln204. L-ornithine is bound by residues Asn232, Asp293, Ser297, and Met298. Cys333 (proton acceptor) is an active-site residue. Carbamoyl phosphate is bound by residues 333–334 (CL) and Arg361.

It belongs to the aspartate/ornithine carbamoyltransferase superfamily. OTCase family. In terms of assembly, homotrimer.

It is found in the plastid. The protein localises to the chloroplast. The enzyme catalyses carbamoyl phosphate + L-ornithine = L-citrulline + phosphate + H(+). This Pisum sativum (Garden pea) protein is Ornithine carbamoyltransferase, chloroplastic (ARGF).